Reading from the N-terminus, the 146-residue chain is Acidic phospholipase A2 2 (146 aa).

Positions 1–21 (MTPAHLLILAAVCVSPLGASS) are cleaved as a signal peptide. Residues 22–27 (SRPMPL) constitute a propeptide that is removed on maturation. Cystine bridges form between Cys-38/Cys-98, Cys-53/Cys-145, Cys-55/Cys-71, Cys-70/Cys-126, Cys-77/Cys-119, Cys-87/Cys-112, and Cys-105/Cys-117. Ca(2+) contacts are provided by Tyr-54, Gly-56, and Gly-58. His-74 is a catalytic residue. Position 75 (Asp-75) interacts with Ca(2+). The active site involves Asp-120.

This sequence belongs to the phospholipase A2 family. Group I subfamily. D49 sub-subfamily. It depends on Ca(2+) as a cofactor. In terms of tissue distribution, expressed by the venom gland.

Its subcellular location is the secreted. It catalyses the reaction a 1,2-diacyl-sn-glycero-3-phosphocholine + H2O = a 1-acyl-sn-glycero-3-phosphocholine + a fatty acid + H(+). PLA2 catalyzes the calcium-dependent hydrolysis of the 2-acyl groups in 3-sn-phosphoglycerides. The chain is Acidic phospholipase A2 2 from Naja atra (Chinese cobra).